The primary structure comprises 103 residues: Signal recognition particle 19 kDa protein (103 aa).

The protein belongs to the SRP19 family. Part of the signal recognition particle protein translocation system, which is composed of SRP and FtsY. Archaeal SRP consists of a 7S RNA molecule of 300 nucleotides and two protein subunits: SRP54 and SRP19.

It localises to the cytoplasm. In terms of biological role, involved in targeting and insertion of nascent membrane proteins into the cytoplasmic membrane. Binds directly to 7S RNA and mediates binding of the 54 kDa subunit of the SRP. This chain is Signal recognition particle 19 kDa protein, found in Hyperthermus butylicus (strain DSM 5456 / JCM 9403 / PLM1-5).